The sequence spans 419 residues: UDP-N-acetylglucosamine 1-carboxyvinyltransferase 2 (419 aa).

24-25 (KN) serves as a coordination point for phosphoenolpyruvate. R94 serves as a coordination point for UDP-N-acetyl-alpha-D-glucosamine. C118 serves as the catalytic Proton donor. C118 carries the 2-(S-cysteinyl)pyruvic acid O-phosphothioketal modification. UDP-N-acetyl-alpha-D-glucosamine is bound by residues 123 to 127 (RPIDQ), D307, and I329.

Belongs to the EPSP synthase family. MurA subfamily.

The protein localises to the cytoplasm. The enzyme catalyses phosphoenolpyruvate + UDP-N-acetyl-alpha-D-glucosamine = UDP-N-acetyl-3-O-(1-carboxyvinyl)-alpha-D-glucosamine + phosphate. The protein operates within cell wall biogenesis; peptidoglycan biosynthesis. Cell wall formation. Adds enolpyruvyl to UDP-N-acetylglucosamine. This is UDP-N-acetylglucosamine 1-carboxyvinyltransferase 2 from Staphylococcus epidermidis (strain ATCC 12228 / FDA PCI 1200).